The primary structure comprises 425 residues: Nucleoporin nup45 (425 aa).

Polar residues predominate over residues 1–10 (MFGLNKTPSF). Residues 1 to 207 (MFGLNKTPSF…GFGLSNNTQT (207 aa)) are disordered. Positions 11 to 27 (GSTGTQNQNTGTSAGTG) are enriched in low complexity. The segment covering 28–45 (LFSSNTFGNNTQANTPAS) has biased composition (polar residues). Residues 47 to 56 (GFGGVTGGAF) show a composition bias toward gly residues. Polar residues predominate over residues 72-89 (PNATSTTPGLNLFGQNPQ). Composition is skewed to low complexity over residues 112–126 (NQNQTQAQPAQAAPT) and 135–150 (QNQTQSQTQPAQANTS). The span at 167–207 (NRPNTSTFGQFSTQPASAGLFGQSTQPSGSTGFGLSNNTQT) shows a compositional bias: polar residues. A phosphoserine mark is found at S289 and S290.

The protein localises to the cytoplasm. It is found in the nucleus. The protein resides in the nuclear pore complex. Its function is as follows. Functions as a component of the nuclear pore complex (NPC). NPC components, collectively referred to as nucleoporins (NUPs), can play the role of both NPC structural components and of docking or interaction partners for transiently associated nuclear transport factors. Active directional transport is assured by both, a Phe-Gly (FG) repeat affinity gradient for these transport factors across the NPC and a transport cofactor concentration gradient across the nuclear envelope. The sequence is that of Nucleoporin nup45 (nup45) from Schizosaccharomyces pombe (strain 972 / ATCC 24843) (Fission yeast).